A 685-amino-acid chain; its full sequence is Glycine--tRNA ligase beta subunit (685 aa).

Positions 58 to 77 are disordered; it reads GLTAQSPTTREERKGPRTDA. A compositionally biased stretch (basic and acidic residues) spans 66–77; it reads TREERKGPRTDA.

This sequence belongs to the class-II aminoacyl-tRNA synthetase family. Tetramer of two alpha and two beta subunits.

It localises to the cytoplasm. It carries out the reaction tRNA(Gly) + glycine + ATP = glycyl-tRNA(Gly) + AMP + diphosphate. This chain is Glycine--tRNA ligase beta subunit, found in Paracoccus denitrificans (strain Pd 1222).